The following is a 421-amino-acid chain: Ethanolamine-phosphate cytidylyltransferase (421 aa).

The helical transmembrane segment at 8 to 28 (IVGSCIVGGAAFAVGASFLHL) threads the bilayer. The tract at residues 203 to 227 (SRSSLQRQFSHGHSSPKFEDGASSA) is disordered. The span at 204 to 215 (RSSLQRQFSHGH) shows a compositional bias: polar residues. CTP contacts are provided by residues 262–263 (AF), 270–273 (HVEI), Arg298, 346–349 (HGTV), and 377–381 (SPLDI). A disordered region spans residues 402–421 (AKKEASEKKYYEQKSFVSGD). Positions 403–413 (KKEASEKKYYE) are enriched in basic and acidic residues. Ser416 is modified (phosphoserine).

It belongs to the cytidylyltransferase family. As to expression, expressed in root tip, lateral root primordia, leaves, shoot apex, stem vascular bundles, pollen and embryos.

It is found in the mitochondrion outer membrane. The enzyme catalyses phosphoethanolamine + CTP + H(+) = CDP-ethanolamine + diphosphate. It functions in the pathway phospholipid metabolism; phosphatidylethanolamine biosynthesis; phosphatidylethanolamine from ethanolamine: step 2/3. Functionally, plays an important role in the biosynthesis of the phospholipid phosphatidylethanolamine. Catalyzes the formation of CDP-ethanolamine. Essential for early embryonic development. The polypeptide is Ethanolamine-phosphate cytidylyltransferase (Arabidopsis thaliana (Mouse-ear cress)).